Here is a 200-residue protein sequence, read N- to C-terminus: Tegument protein UL55 homolog (200 aa).

The span at 1-20 shows a compositional bias: basic and acidic residues; sequence MLPANRAEHSSDAEPRDIGS. The tract at residues 1–23 is disordered; that stretch reads MLPANRAEHSSDAEPRDIGSHGR.

Belongs to the alphaherpesvirinae HHV-1 UL55 family.

Its subcellular location is the virion tegument. It localises to the host nucleus matrix. This Equine herpesvirus 1 (strain Ab4p) (EHV-1) protein is Tegument protein UL55 homolog.